Reading from the N-terminus, the 588-residue chain is Protein kintoun (588 aa).

Disordered regions lie at residues 199-223 (PGYE…PENS), 338-498 (PPLE…SSQE), and 510-535 (AANV…ADED). Residues 202–212 (EAKEPPEERDL) are compositionally biased toward basic and acidic residues. Polar residues predominate over residues 350 to 361 (PNPTSDPQNENQ). 2 stretches are compositionally biased toward basic and acidic residues: residues 362–382 (TRVE…HQRG) and 393–433 (QVLE…KFEL). Residues 435–447 (DVQQENKGNCSNT) show a composition bias toward polar residues. Residues 448 to 460 (KEVKCCRRTKDSL) are compositionally biased toward basic and acidic residues.

This sequence belongs to the PIH1 family. Kintoun subfamily.

The protein localises to the cytoplasm. It localises to the dynein axonemal particle. In terms of biological role, required for cytoplasmic pre-assembly of axonemal dyneins, thereby playing a central role in motility in cilia and flagella. Involved in pre-assembly of dynein arm complexes in the cytoplasm before intraflagellar transport loads them for the ciliary compartment. The chain is Protein kintoun from Oryzias latipes (Japanese rice fish).